The following is a 141-amino-acid chain: Transcription antitermination protein NusB (141 aa).

This sequence belongs to the NusB family.

Its function is as follows. Involved in transcription antitermination. Required for transcription of ribosomal RNA (rRNA) genes. Binds specifically to the boxA antiterminator sequence of the ribosomal RNA (rrn) operons. This chain is Transcription antitermination protein NusB, found in Neisseria meningitidis serogroup C (strain 053442).